The sequence spans 239 residues: MRLDYLSIFPAYFDVLDISLLGKAAVNGLVEVHAHDLRDWTHDRHRTVDDTPCGGGAGMVMKPDPWGEAFDEIIGTEPDSSVHVIFPSPSGAPFTQSAAQELSSAVRIVFCCGRYEGIDHRVIDYARSMWTVHEVSLGDYVLNGGEVAALAITEAVVRLVPGFMGNPESLAEESFSAGQDGLLEYPLFTRPVSWRGLDVPEVLMSGHHGRIAKWRRDESVRLTCERRPDLTDSDFGVPH.

S-adenosyl-L-methionine-binding positions include G113 and 137-142; that span reads LGDYVL.

The protein belongs to the RNA methyltransferase TrmD family. Homodimer.

The protein resides in the cytoplasm. It carries out the reaction guanosine(37) in tRNA + S-adenosyl-L-methionine = N(1)-methylguanosine(37) in tRNA + S-adenosyl-L-homocysteine + H(+). In terms of biological role, specifically methylates guanosine-37 in various tRNAs. This chain is tRNA (guanine-N(1)-)-methyltransferase, found in Cutibacterium acnes (strain DSM 16379 / KPA171202) (Propionibacterium acnes).